The following is a 209-amino-acid chain: Pyridoxine/pyridoxamine 5'-phosphate oxidase (209 aa).

Substrate-binding positions include 2 to 5 (RVEY) and K66. Residues 61–66 (RTVLCK), 76–77 (FT), K83, and Q105 contribute to the FMN site. Residues Y123, R127, and S131 each contribute to the substrate site. Residues 140–141 (QS) and W186 contribute to the FMN site. A substrate-binding site is contributed by 192 to 194 (RVH). Residue R196 participates in FMN binding.

This sequence belongs to the pyridoxamine 5'-phosphate oxidase family. As to quaternary structure, homodimer. Requires FMN as cofactor.

The catalysed reaction is pyridoxamine 5'-phosphate + O2 + H2O = pyridoxal 5'-phosphate + H2O2 + NH4(+). The enzyme catalyses pyridoxine 5'-phosphate + O2 = pyridoxal 5'-phosphate + H2O2. The protein operates within cofactor metabolism; pyridoxal 5'-phosphate salvage; pyridoxal 5'-phosphate from pyridoxamine 5'-phosphate: step 1/1. It functions in the pathway cofactor metabolism; pyridoxal 5'-phosphate salvage; pyridoxal 5'-phosphate from pyridoxine 5'-phosphate: step 1/1. Functionally, catalyzes the oxidation of either pyridoxine 5'-phosphate (PNP) or pyridoxamine 5'-phosphate (PMP) into pyridoxal 5'-phosphate (PLP). The protein is Pyridoxine/pyridoxamine 5'-phosphate oxidase of Mycobacterium sp. (strain JLS).